The sequence spans 601 residues: Probable inactive receptor kinase At1g27190 (601 aa).

The first 24 residues, 1-24 (MKKIFITLLWLLFISSFLCSSSSA), serve as a signal peptide directing secretion. Asparagine 52 is a glycosylation site (N-linked (GlcNAc...) asparagine). LRR repeat units follow at residues 73-95 (RIIS…LKLC), 97-119 (SLQS…ICSW), 122-144 (YLVT…IVEC), 146-169 (FLNA…SRLD), and 170-192 (RLRR…LARF). A helical membrane pass occupies residues 221–241 (IIIVAGVLGAVGSLCVGLVIF). The residue at position 298 (threonine 298) is a Phosphothreonine. The 286-residue stretch at 301-586 (FSSGNIDVSS…KNMADKHGVS (286 aa)) folds into the Protein kinase domain. ATP contacts are provided by residues 307–315 (DVSSRTGVS) and lysine 329. Serine 383 is modified (phosphoserine). Threonine 399 carries the phosphothreonine modification. At tyrosine 476 the chain carries Phosphotyrosine. The residue at position 478 (serine 478) is a Phosphoserine. A Phosphothreonine modification is found at threonine 479. Serine 483 and serine 586 each carry phosphoserine.

This sequence belongs to the protein kinase superfamily. Ser/Thr protein kinase family.

It is found in the membrane. This chain is Probable inactive receptor kinase At1g27190, found in Arabidopsis thaliana (Mouse-ear cress).